The sequence spans 1407 residues: MKGLLDLFKQFTPDEHFDAIKIGLASPEKIRSWSFGEVKKPETINYRTFKPERDGLFCAKIFGPIKDYECLCGKYKRLKHRGVICEKCGVEVTQTKVRRDRMGHIDLAAPCAHIWFLKSLPSRLGLVLDMTLRDIERVLYFEAYVVTDPGMTPLKKFSIMTEDDYDTKKREFGDEFVALMGAEGIKQLLQEMDLDTEIDKLRNDMTGSELKVKKNSKRLKVMEAFKKSGIKPNWMVMDVLPVLPPDLRPLVPLDGGRFATSDLNDLYRRVINRNNRLARLLELKAPEIIVRNEKRMLQEAVDSLLDNGRRGKAMTGANKRALKSLADMIKGKSGRFRQNLLGKRVDYSGRSVITVGPYLKLHQCGLPKLMALELFKPFIFSRLEAMGIASTIKQAKKEVESGTPVVWDILEEVIKEHPVMLNRAPTLHRLGIQAFEPVLIEGKAIQLHPLVCSAFNADFDGDQMAVHVPLSIEAQMEARTLMLASNNVLFPASGEPSIVPSQDVVLGLYYATRERTNGLGEGMIFSDVVEVQRALDNKVVEITARISVRLTEWLRPEDGSDNFEPHTSLIHTTVGRALLSEILPKGLPFSVMNKALKKKEISRLINTAFRKCGLKATVVFADKLLQSGFRLATRAGISIAIDDMLVPKQKQMLIERAENEVKEIEQQYVSGLVTAGERYNKVVDIWGKTGDEVGKVMMSQLSKQKVIDRNGKEVDQESFNSIYMMADSGARGSAAQIRQLAGMRGLMAKPDGSIIETPITANFREGLNVLQYFISTHGARKGLADTALKTANSGYLTRRLVDVTQDLVVIEDDCGTDNGMAMRALVEGGEVIESLRDRILGRVTAIDVTHPETQEVLVLAGKMLDEDTMEVLEAAGVDEVKVRTSLTCDTRFGICAKCYGRDLGRGGLVNQGEAVGVIAAQSIGEPGTQLTMRTFHIGGAASRAAVASSVDAKSDGIIGFNSTMRYVTNAKGELVVISRSGEIIITDPHGRERERHKVPYGAILNVKPDQTLKAGTILGNWDPLTRPIITEFAGHTRFENVEEGVTVAKQVDEVTGLSTLVVIDPKRRGSAKVVRPQVKLLDVNGQEVKIPGTDHSVTIGFPIGALIQVRDGQDVMPGEVLARIPVEGQKTRDITGGLPRVAELFEARTPKDKGILAEVTGTVSFGKETKGKVRLQITDPEGKVYEELVPKEKNIVVHEGQVVNKGESIIDGPADPQDILRLLGVEELARYIVDEVQDVYRLQGVKINDKHIEVIVRQMLRRVQITNPGDSHYILGEQVERSELFGTNDKLRAQDKLPATYSDVLLGITKASLSTDSFISAASFQETTRVLTEAAIMGKRDELRGLKENVIVGRLIPAGTGMAYHQARKAKDELDDNERRLIAMQEAQEALAAVDADMADSAGNAAE.

Residues Cys-70, Cys-72, Cys-85, and Cys-88 each coordinate Zn(2+). The Mg(2+) site is built by Asp-458, Asp-460, and Asp-462. Cys-814, Cys-888, Cys-895, and Cys-898 together coordinate Zn(2+).

The protein belongs to the RNA polymerase beta' chain family. In terms of assembly, the RNAP catalytic core consists of 2 alpha, 1 beta, 1 beta' and 1 omega subunit. When a sigma factor is associated with the core the holoenzyme is formed, which can initiate transcription. Mg(2+) serves as cofactor. Zn(2+) is required as a cofactor.

It catalyses the reaction RNA(n) + a ribonucleoside 5'-triphosphate = RNA(n+1) + diphosphate. DNA-dependent RNA polymerase catalyzes the transcription of DNA into RNA using the four ribonucleoside triphosphates as substrates. This is DNA-directed RNA polymerase subunit beta' from Leptothrix cholodnii (strain ATCC 51168 / LMG 8142 / SP-6) (Leptothrix discophora (strain SP-6)).